Reading from the N-terminus, the 71-residue chain is Conotoxin ba5b (71 aa).

The first 19 residues, 1–19 (MLCLPVFITLLLLVSPSAA), serve as a signal peptide directing secretion. The propeptide occupies 20 to 52 (LPVESELQRDLTQDSPKDFRIREPLLLSKMFDR). Disulfide bonds link cysteine 54-cysteine 63 and cysteine 55-cysteine 64. Residue cysteine 64 is modified to Cysteine amide. Residues 66-71 (RYQRGS) constitute a propeptide that is removed on maturation.

Belongs to the conotoxin T superfamily. Expressed by the venom duct.

The protein resides in the secreted. The protein is Conotoxin ba5b of Conus bayani (Bayan's cone).